The sequence spans 143 residues: Putative 2'-deoxynucleoside 5'-phosphate N-hydrolase 1 (143 aa).

Residues His37, Glu82, and 106-108 (SAM) each bind substrate.

This sequence belongs to the 2'-deoxynucleoside 5'-phosphate N-hydrolase 1 family. In terms of assembly, monomer and homodimer.

The enzyme catalyses a pyrimidine 2'-deoxyribonucleoside 5'-phosphate + H2O = a pyrimidine nucleobase + 2-deoxy-D-ribose 5-phosphate. It carries out the reaction a purine 2'-deoxyribonucleoside 5'-phosphate + H2O = a purine nucleobase + 2-deoxy-D-ribose 5-phosphate. Its function is as follows. Catalyzes the cleavage of the N-glycosidic bond of deoxyribonucleoside 5'-monophosphates to yield deoxyribose 5-phosphate and a purine or pyrimidine base. In Thermofilum pendens (strain DSM 2475 / Hrk 5), this protein is Putative 2'-deoxynucleoside 5'-phosphate N-hydrolase 1.